A 401-amino-acid polypeptide reads, in one-letter code: Argininosuccinate synthase (401 aa).

9 to 17 (AYSGGLDTS) contributes to the ATP binding site. Position 88 (Tyr-88) interacts with L-citrulline. Gly-118 contributes to the ATP binding site. Residues Thr-120, Asn-124, and Asp-125 each contribute to the L-aspartate site. Asn-124 provides a ligand contact to L-citrulline. L-citrulline contacts are provided by Arg-128, Ser-177, Ser-186, Glu-262, and Tyr-274.

The protein belongs to the argininosuccinate synthase family. Type 1 subfamily. As to quaternary structure, homotetramer.

The protein localises to the cytoplasm. It catalyses the reaction L-citrulline + L-aspartate + ATP = 2-(N(omega)-L-arginino)succinate + AMP + diphosphate + H(+). It participates in amino-acid biosynthesis; L-arginine biosynthesis; L-arginine from L-ornithine and carbamoyl phosphate: step 2/3. The polypeptide is Argininosuccinate synthase (Chlorobaculum tepidum (strain ATCC 49652 / DSM 12025 / NBRC 103806 / TLS) (Chlorobium tepidum)).